Here is a 224-residue protein sequence, read N- to C-terminus: Orotate phosphoribosyltransferase (224 aa).

5-phospho-alpha-D-ribose 1-diphosphate contacts are provided by residues Lys-26, 73 to 74 (YK), Arg-100, Lys-101, Lys-104, His-106, and 127 to 135 (EDVTTSGKS). Residues Thr-131 and Arg-160 each contribute to the orotate site.

The protein belongs to the purine/pyrimidine phosphoribosyltransferase family. PyrE subfamily. As to quaternary structure, homodimer. It depends on Mg(2+) as a cofactor.

The catalysed reaction is orotidine 5'-phosphate + diphosphate = orotate + 5-phospho-alpha-D-ribose 1-diphosphate. It participates in pyrimidine metabolism; UMP biosynthesis via de novo pathway; UMP from orotate: step 1/2. In terms of biological role, catalyzes the transfer of a ribosyl phosphate group from 5-phosphoribose 1-diphosphate to orotate, leading to the formation of orotidine monophosphate (OMP). The chain is Orotate phosphoribosyltransferase from Clostridium botulinum (strain Alaska E43 / Type E3).